Here is a 124-residue protein sequence, read N- to C-terminus: Small ribosomal subunit protein uS12 (124 aa).

Position 89 is a 3-methylthioaspartic acid (Asp89). The segment at 104 to 124 (SAGVQNRNRGRSKYGTKRPKK) is disordered. Residues 111–124 (NRGRSKYGTKRPKK) show a composition bias toward basic residues.

It belongs to the universal ribosomal protein uS12 family. As to quaternary structure, part of the 30S ribosomal subunit. Contacts proteins S8 and S17. May interact with IF1 in the 30S initiation complex.

Its function is as follows. With S4 and S5 plays an important role in translational accuracy. Interacts with and stabilizes bases of the 16S rRNA that are involved in tRNA selection in the A site and with the mRNA backbone. Located at the interface of the 30S and 50S subunits, it traverses the body of the 30S subunit contacting proteins on the other side and probably holding the rRNA structure together. The combined cluster of proteins S8, S12 and S17 appears to hold together the shoulder and platform of the 30S subunit. This is Small ribosomal subunit protein uS12 from Pelotomaculum thermopropionicum (strain DSM 13744 / JCM 10971 / SI).